A 1013-amino-acid chain; its full sequence is Putative helicase mov-10-B.1 (1013 aa).

Composition is skewed to polar residues over residues 91 to 103 (QWSRPYRSQQNHA) and 113 to 123 (RPSTTRVSDPS). The interval 91–129 (QWSRPYRSQQNHATPHLNDAISRPSTTRVSDPSSVPEPE) is disordered. Position 550–557 (550–557 (GPPGTGKT)) interacts with ATP. The DEAG box motif lies at 672–675 (DEAG).

The protein belongs to the DNA2/NAM7 helicase family. SDE3 subfamily.

It localises to the cytoplasm. The protein resides in the P-body. The catalysed reaction is ATP + H2O = ADP + phosphate + H(+). Probable RNA helicase. Required for RNA-mediated gene silencing by the RNA-induced silencing complex (RISC). Required for both miRNA-mediated translational repression and miRNA-mediated cleavage of complementary mRNAs by RISC. The sequence is that of Putative helicase mov-10-B.1 (mov10b.1) from Danio rerio (Zebrafish).